Reading from the N-terminus, the 138-residue chain is Acidic phospholipase A2 BE-I-PLA2 (138 aa).

The first 16 residues, 1–16, serve as a signal peptide directing secretion; it reads MRTLWIMAVLLVGVEG. Cystine bridges form between Cys42/Cys131, Cys44/Cys60, Cys59/Cys111, Cys65/Cys138, Cys66/Cys104, Cys73/Cys97, and Cys91/Cys102. Residues Tyr43, Gly45, and Gly47 each contribute to the Ca(2+) site. His63 is an active-site residue. Asp64 contributes to the Ca(2+) binding site. The active site involves Asp105.

The protein belongs to the phospholipase A2 family. Group II subfamily. D49 sub-subfamily. Ca(2+) serves as cofactor. As to expression, expressed by the venom gland.

It is found in the secreted. The catalysed reaction is a 1,2-diacyl-sn-glycero-3-phosphocholine + H2O = a 1-acyl-sn-glycero-3-phosphocholine + a fatty acid + H(+). Its function is as follows. Snake venom phospholipase A2 that shows a potent inhibition of human platelet aggregation. This inhibition is concentration-dependent when aggregation is induced by collagen, and concentration-independent when aggregation is induced by arachidonic acid. In human umbilical-cord vein endothelial cells, this toxin stimulates endothelial cells to release prostaglandin I(2), suggesting an increase of its potential anti-platelet activity in vivo. PLA2 catalyzes the calcium-dependent hydrolysis of the 2-acyl groups in 3-sn-phosphoglycerides. This is Acidic phospholipase A2 BE-I-PLA2 from Bothrops erythromelas (Caatinga lance head).